Consider the following 1583-residue polypeptide: Transcriptional activator GLI3 (1583 aa).

Met1 is modified (N-acetylmethionine). 2 stretches are compositionally biased toward polar residues: residues 1-10 (MEAQAHSSTA) and 58-78 (ITMQ…PSTS). Residues 1–78 (MEAQAHSSTA…NKISEEPSTS (78 aa)) are disordered. An Omega-N-methylarginine modification is found at Arg175. Residues 368–475 (QSLGSAFGHS…DKDESKQEPE (108 aa)) form a disordered region. Positions 403 to 421 (VQVSSGPSESSQSKPTSES) are enriched in low complexity. A Glycyl lysine isopeptide (Lys-Gly) (interchain with G-Cter in SUMO2) cross-link involves residue Lys438. A compositionally biased stretch (polar residues) spans 448–457 (SRGQQEQPEG). A compositionally biased stretch (basic and acidic residues) spans 461–474 (VKEEADKDESKQEP). Lys462 is covalently cross-linked (Glycyl lysine isopeptide (Lys-Gly) (interchain with G-Cter in SUMO2)). 5 consecutive C2H2-type zinc fingers follow at residues 480-505 (TNCH…NNDH), 513-540 (FVCR…MRRH), 546-570 (HKCT…LRSH), 576-601 (YVCE…NRTH), and 607-632 (YVCK…KTVH). The disordered stretch occupies residues 620–728 (DPSSLRKHVK…PISNYSNSGL (109 aa)). The span at 632–648 (HGPEAHVTKKQRGDMHP) shows a compositional bias: basic and acidic residues. Ser664 carries the phosphoserine modification. The segment covering 684 to 699 (SKREECLQVKTVKAEK) has biased composition (basic and acidic residues). Over residues 703–726 (SQPSPGGQSSCSSQQSPISNYSNS) the composition is skewed to low complexity. Positions 745–845 (DETPIMDSTI…VDFTVLNTLN (101 aa)) are mediates interaction with DZIP1. A Glycyl lysine isopeptide (Lys-Gly) (interchain with G-Cter in ubiquitin) cross-link involves residue Lys773. A Glycyl lysine isopeptide (Lys-Gly) (interchain with G-Cter in SUMO2); alternate cross-link involves residue Lys779. Lys779 is covalently cross-linked (Glycyl lysine isopeptide (Lys-Gly) (interchain with G-Cter in ubiquitin); alternate). Residues Lys784 and Lys800 each participate in a glycyl lysine isopeptide (Lys-Gly) (interchain with G-Cter in ubiquitin) cross-link. The disordered stretch occupies residues 809-828 (GNGTQSNNNYSSGGPGTLLP). Polar residues predominate over residues 810-820 (NGTQSNNNYSS). Phosphoserine; by PKA occurs at positions 849, 865, 877, 907, 980, and 1006. A compositionally biased stretch (low complexity) spans 863-880 (RSSGISPCFSSRRSSEAS). The disordered stretch occupies residues 863-918 (RSSGISPCFSSRRSSEASQAEGRPQNVSVADSYDPISTDASRRSSEASQGDGLPSL). The tract at residues 1164–1189 (EVSSGTSDLSSSKLKCGQQRPSAQQP) is disordered. The span at 1166-1175 (SSGTSDLSSS) shows a compositional bias: low complexity.

It belongs to the GLI C2H2-type zinc-finger protein family. In terms of assembly, the phosphorylated form interacts with BTRC. The full-length GLI3 form (GLI3FL) interacts with SUFU and this interaction regulates the formation of either repressor or activator forms of GLI3. Its association with SUFU is regulated by Hh signaling and dissociation of the SUFU-GLI3 interaction requires the presence of the ciliary motor KIF3A. Interacts with KIF7. The activator form of GLI3 (GLI3A) but not the repressor form (GLI3R) can interact with TRPS1. Interacts with ZIC1. Interacts with ZIC3 (via C2H2-type domains 3, 4 and 5); the interaction enhances its transcriptional activity. Interacts with WRD11; the interaction associates EMX1 with GLI3. Interacts with DZIP1; retains GLI3 within the cytoplasm. Post-translationally, phosphorylated by DYRK2 (in vitro). Phosphorylated on multiple sites by protein kinase A (PKA) and phosphorylation by PKA primes further phosphorylation by CK1 and GSK3. Phosphorylation is essential for its proteolytic processing. In terms of processing, transcriptional repressor GLI3R, a C-terminally truncated form, is generated from the full-length GLI3 protein (GLI3FL/GLI3-190) through proteolytic processing. This process requires PKA-primed phosphorylation of GLI3, ubiquitination of GLI3 and the presence of BTRC. GLI3FL is complexed with SUFU in the cytoplasm and is maintained in a neutral state. Without the Hh signal, the SUFU-GLI3 complex is recruited to cilia, leading to the efficient processing of GLI3FL into GLI3R. GLI3R formation leads to its dissociation from SUFU, allowing it to translocate into the nucleus, and repress Hh target genes. When Hh signaling is initiated, SUFU dissociates from GLI3FL and this has two consequences. First, GLI3R production is halted. Second, free GLI3FL translocates to the nucleus, where it is phosphorylated, destabilized, and converted to a transcriptional activator (GLI3A). Phosphorylated in vitro by ULK3.

It is found in the nucleus. It localises to the cytoplasm. The protein resides in the cell projection. Its subcellular location is the cilium. Its function is as follows. Has a dual function as a transcriptional activator and a repressor of the sonic hedgehog (Shh) pathway, and plays a role in limb development. The full-length GLI3 form (GLI3FL) after phosphorylation and nuclear translocation, acts as an activator (GLI3A) while GLI3R, its C-terminally truncated form, acts as a repressor. A proper balance between the GLI3 activator and the repressor GLI3R, rather than the repressor gradient itself or the activator/repressor ratio gradient, specifies limb digit number and identity. In concert with TRPS1, plays a role in regulating the size of the zone of distal chondrocytes, in restricting the zone of PTHLH expression in distal cells and in activating chondrocyte proliferation. Binds to the minimal GLI-consensus sequence 5'-GGGTGGTC-3'. This chain is Transcriptional activator GLI3 (Gli3), found in Mus musculus (Mouse).